A 207-amino-acid chain; its full sequence is Ribosomal RNA small subunit methyltransferase G (207 aa).

Residues Gly-76, Gln-81, 127-128 (VE), and Arg-141 each bind S-adenosyl-L-methionine.

The protein belongs to the methyltransferase superfamily. RNA methyltransferase RsmG family.

The protein localises to the cytoplasm. The catalysed reaction is guanosine(527) in 16S rRNA + S-adenosyl-L-methionine = N(7)-methylguanosine(527) in 16S rRNA + S-adenosyl-L-homocysteine. Functionally, specifically methylates the N7 position of guanine in position 527 of 16S rRNA. This chain is Ribosomal RNA small subunit methyltransferase G, found in Neisseria meningitidis serogroup A / serotype 4A (strain DSM 15465 / Z2491).